The following is a 271-amino-acid chain: Cobalt import ATP-binding protein CbiO (271 aa).

An ABC transporter domain is found at 2-236 (LATSDLWFRY…TEAMEHAGLT (235 aa)). Residue 34–41 (GANGCGKS) participates in ATP binding.

This sequence belongs to the ABC transporter superfamily. Cobalt importer (TC 3.A.1.18.1) family. In terms of assembly, forms an energy-coupling factor (ECF) transporter complex composed of an ATP-binding protein (A component, CbiO), a transmembrane protein (T component, CbiQ) and 2 possible substrate-capture proteins (S components, CbiM and CbiN) of unknown stoichimetry.

Its subcellular location is the cell inner membrane. The protein operates within cofactor biosynthesis; adenosylcobalamin biosynthesis. Functionally, part of the energy-coupling factor (ECF) transporter complex CbiMNOQ involved in cobalt import. Presumably responsible for energy coupling to the transport system. In Salmonella paratyphi A (strain ATCC 9150 / SARB42), this protein is Cobalt import ATP-binding protein CbiO.